We begin with the raw amino-acid sequence, 338 residues long: Heat-inducible transcription repressor HrcA (338 aa).

The protein belongs to the HrcA family.

Negative regulator of class I heat shock genes (grpE-dnaK-dnaJ and groELS operons). Prevents heat-shock induction of these operons. In Thermotoga petrophila (strain ATCC BAA-488 / DSM 13995 / JCM 10881 / RKU-1), this protein is Heat-inducible transcription repressor HrcA.